The primary structure comprises 165 residues: MYIEMVDETGQVSEEILKQTQEILEFAAQKTGKENKEMAVTFVSNERSHELNLEYRDTDRPTDVISLEYKPELDIAVDEEDLLDHPELAEMLEDFDAYIGELFISVDKAREQAEEYGHSFEREMGFLAVHGFLHINGYDHYTPEEEAEMFGLQEEILTAYGLTRK.

Zn(2+) is bound by residues His-130, His-134, and His-140.

Belongs to the endoribonuclease YbeY family. Requires Zn(2+) as cofactor.

It is found in the cytoplasm. Functionally, single strand-specific metallo-endoribonuclease involved in late-stage 70S ribosome quality control and in maturation of the 3' terminus of the 16S rRNA. In Streptococcus sanguinis (strain SK36), this protein is Endoribonuclease YbeY.